The following is a 306-amino-acid chain: Light-independent protochlorophyllide reductase iron-sulfur ATP-binding protein (306 aa).

The interval 1 to 31 (MREAAGLEARGLKSPPILKGQDGEGSLQVHQ) is disordered. ATP contacts are provided by residues 50–55 (GIGKST) and Lys-79. Ser-54 is a binding site for Mg(2+). Residues Cys-135 and Cys-169 each contribute to the [4Fe-4S] cluster site. ATP is bound at residue 220–221 (NR).

It belongs to the NifH/BchL/ChlL family. Homodimer. Protochlorophyllide reductase is composed of three subunits; BchL, BchN and BchB. The cofactor is [4Fe-4S] cluster.

The enzyme catalyses chlorophyllide a + oxidized 2[4Fe-4S]-[ferredoxin] + 2 ADP + 2 phosphate = protochlorophyllide a + reduced 2[4Fe-4S]-[ferredoxin] + 2 ATP + 2 H2O. It participates in porphyrin-containing compound metabolism; bacteriochlorophyll biosynthesis (light-independent). Functionally, component of the dark-operative protochlorophyllide reductase (DPOR) that uses Mg-ATP and reduced ferredoxin to reduce ring D of protochlorophyllide (Pchlide) to form chlorophyllide a (Chlide). This reaction is light-independent. The L component serves as a unique electron donor to the NB-component of the complex, and binds Mg-ATP. The sequence is that of Light-independent protochlorophyllide reductase iron-sulfur ATP-binding protein from Jannaschia sp. (strain CCS1).